The primary structure comprises 868 residues: Facilitated trehalose transporter Tret1 (868 aa).

Disordered regions lie at residues 1–213 (MSGR…QKAT) and 257–314 (KESS…LIHR). The Cytoplasmic portion of the chain corresponds to 1–403 (MSGRDNRGAG…VYRPTTNPIY (403 aa)). Positions 25–43 (KLKEKLTRAGDDQGYHRVE) are enriched in basic and acidic residues. Composition is skewed to low complexity over residues 44 to 57 (SNLS…SLDT), 79 to 91 (PQQQ…QQLR), and 117 to 126 (PFQQQQQRTP). 2 stretches are compositionally biased toward basic and acidic residues: residues 146 to 155 (EIREHRDRQQ) and 257 to 290 (KESS…KLDK). Phosphoserine is present on residues S259, S260, S261, S331, and S333. Positions 335 to 367 (EDFHTSRQHFQQQRSISTDSRKSRRPYEMDEMG) are disordered. Polar residues predominate over residues 342–352 (QHFQQQRSIST). The segment covering 353 to 367 (DSRKSRRPYEMDEMG) has biased composition (basic and acidic residues). A helical membrane pass occupies residues 404–424 (IWTQVLAALSVSLGSLVVGFV). Topologically, residues 425–451 (SAYTSPALVSMTNRNMTSFEVTPQAAS) are extracellular. An N-linked (GlcNAc...) asparagine glycan is attached at N439. Residues 452-472 (WVGGIMPLAGLAGGIAGGPFI) traverse the membrane as a helical segment. At 473–484 (EYLGRRNTILAT) the chain is on the cytoplasmic side. The helical transmembrane segment at 485 to 505 (AIPFIVSSLLIACAVNVAMVL) threads the bilayer. Residues 506 to 508 (AGR) lie on the Extracellular side of the membrane. The helical transmembrane segment at 509–529 (FLAGFCVGIASLSLPVYLGET) threads the bilayer. Over 530–535 (VQPEVR) the chain is Cytoplasmic. A helical transmembrane segment spans residues 536 to 556 (GTLGLLPTAFGNIGILLCFVA). Residues 557–563 (GTYMDWS) lie on the Extracellular side of the membrane. A helical membrane pass occupies residues 564–584 (MLAFLGAALPVPFLILMFLIP). The Cytoplasmic segment spans residues 585–653 (ETPRWFVSRG…NLKPLSISLG (69 aa)). A helical transmembrane segment spans residues 654–674 (LMFFQQLSGINAVIFYTVSIF). Over 675 to 684 (KDAGSTIDGN) the chain is Extracellular. The helical transmembrane segment at 685–705 (LCTIIVGIVNFMATFIATLLI) threads the bilayer. Residues 706–711 (DRAGRK) lie on the Cytoplasmic side of the membrane. A helical transmembrane segment spans residues 712–732 (ILLYVSNIAMIITLFVLGGFF). Topologically, residues 733-751 (YCKSHGQDVSQLGWLPLSC) are extracellular. Residues 752–772 (FVIYILGFSLGFGPIPWLMMG) form a helical membrane-spanning segment. Topologically, residues 773–778 (EILPSK) are cytoplasmic. A helical membrane pass occupies residues 779–799 (IRGSAASVATAFNWSCTFVVT). Topologically, residues 800–812 (KTFQDMIDFMGAH) are extracellular. The helical transmembrane segment at 813-833 (GAFWLFGSICFIGLFFVILYV) threads the bilayer. At 834–868 (PETQGKTLEDIERKMMGRVRRMSSVANMKPLAFNM) the chain is on the cytoplasmic side. 2 positions are modified to phosphoserine: S856 and S857.

It belongs to the major facilitator superfamily. Sugar transporter (TC 2.A.1.1) family. Trehalose transporter subfamily.

It is found in the cell membrane. Low-capacity facilitative transporter for trehalose. Does not transport maltose, sucrose or lactose. Mediates the bidirectional transfer of trehalose. Responsible for the transport of trehalose synthesized in the fat body and the incorporation of trehalose into other tissues that require a carbon source, thereby regulating trehalose levels in the hemolymph. The sequence is that of Facilitated trehalose transporter Tret1 from Drosophila pseudoobscura pseudoobscura (Fruit fly).